The sequence spans 154 residues: Leghemoglobin-2 (154 aa).

Positions 3-151 (ALTESQAALV…LAIVIKKEMN (149 aa)) constitute a Globin domain. Ser-46 provides a ligand contact to heme b. Ser-46 is subject to Phosphoserine. O2 is bound at residue His-64. Residues Lys-67, His-98, and Lys-101 each contribute to the heme b site. A Nitrated tyrosine modification is found at Tyr-139.

This sequence belongs to the plant globin family. In terms of assembly, monomer. Nitrated in effective nodules and particularly in hypoxic conditions; this mechanism may play a protective role in the symbiosis by buffering toxic peroxynitrite NO(2)(-). Nitration level decrease during nodule senescence. Post-translationally, phosphorylation at Ser-46 disrupts the molecular environment of its porphyrin ring oxygen binding pocket, thus leading to a reduced oxygen consumption and to the delivery of oxygen O(2) to symbiosomes. As to expression, root nodules.

The protein resides in the cytoplasm. Its subcellular location is the cytosol. It localises to the nucleus. Leghemoglobin that reversibly binds oxygen O(2) through a pentacoordinated heme iron. In root nodules, facilitates the diffusion of oxygen to the bacteroids while preventing the bacterial nitrogenase from being inactivated by buffering dioxygen, nitric oxide and carbon monoxide, and promoting the formation of reactive oxygen species (ROS, e.g. H(2)O(2)). This role is essential for symbiotic nitrogen fixation (SNF). This chain is Leghemoglobin-2, found in Lupinus luteus (European yellow lupine).